Consider the following 357-residue polypeptide: GDP-mannose transporter 2 (357 aa).

Over 1 to 33 (MASARNGVSKDELLPVYERRSQRDGDISGSVKS) the chain is Cytoplasmic. The chain crosses the membrane as a helical span at residues 34 to 54 (FASTIGNSASAAVLAYCLSSI). Residues 55 to 68 (SMTLVNKYVVSGAS) are Lumenal-facing. A helical membrane pass occupies residues 69-89 (WNLSFLYLAMQSFIGTVAILA). The Cytoplasmic segment spans residues 90-107 (CKKTGLIQNLALFDLKKA). A helical transmembrane segment spans residues 108-128 (QTWLPISLLLVGMIYTGNKAL). Position 129 (Gln-129) is a topological domain, lumenal. The helical transmembrane segment at 130–150 (FLSVPVYTIFKNLTIIVIAYG) threads the bilayer. Topologically, residues 151–161 (EVLMVGGGVKP) are cytoplasmic. Residues 162 to 181 (LALLSFGLMVLSSVVAAWAD) traverse the membrane as a helical segment. Residues 182–196 (IQNATTATVGASSDS) lie on the Lumenal side of the membrane. A glycan (N-linked (GlcNAc...) asparagine) is linked at Asn-184. Residues 197-217 (TAAALSALNAGYAWMGTNVIF) traverse the membrane as a helical segment. Over 218-236 (SASYALGMRRVIKKTNFDN) the chain is Cytoplasmic. Residues 237 to 257 (WDVMFYNNLLSIPILLLASVL) traverse the membrane as a helical segment. The Lumenal portion of the chain corresponds to 258 to 277 (AEDWSSENLQRNFPAELRQS). Residues 278–298 (LFIGILYSGVAAVFISYCTAW) form a helical membrane-spanning segment. Over 299–306 (CVRATSST) the chain is Cytoplasmic. Residues 307 to 327 (TYAMVGALNKLPLAVAGIVFF) traverse the membrane as a helical segment. Topologically, residues 328–332 (AAPVT) are lumenal. Residues 333-352 (FGSVSAIVLGFISGLVYARA) form a helical membrane-spanning segment. At 353 to 357 (KSTGA) the chain is on the cytoplasmic side.

The protein belongs to the TPT transporter family. SLC35D subfamily. Homooligomer.

Its subcellular location is the golgi apparatus membrane. The protein localises to the cytoplasmic vesicle membrane. It localises to the endoplasmic reticulum membrane. Its function is as follows. Involved in the import of GDP-mannose from the cytoplasm into the Golgi lumen. The sequence is that of GDP-mannose transporter 2 (gmt2) from Neosartorya fischeri (strain ATCC 1020 / DSM 3700 / CBS 544.65 / FGSC A1164 / JCM 1740 / NRRL 181 / WB 181) (Aspergillus fischerianus).